The following is a 156-amino-acid chain: MAKTFKFIFYFWGAFVLVFALDQWVKSLTLAGFRWQSEYLDLTYALNTGVAFSMLSFLEHNLKYLHLALIGVLFIYLFWQRTLLKTHSIAFGMMLGAGVSNLLDRFIHGGVVDMFFWHKWFNFAIFNVADVMINISVALILIQEIFKKRKKDDRMD.

Transmembrane regions (helical) follow at residues 5–25 (FKFIFYFWGAFVLVFALDQWV), 64–84 (YLHLALIGVLFIYLFWQRTLL), and 89–109 (IAFGMMLGAGVSNLLDRFIHG). Residues D113 and D130 contribute to the active site. The helical transmembrane segment at 122–142 (NFAIFNVADVMINISVALILI) threads the bilayer.

This sequence belongs to the peptidase A8 family.

It is found in the cell inner membrane. The catalysed reaction is Release of signal peptides from bacterial membrane prolipoproteins. Hydrolyzes -Xaa-Yaa-Zaa-|-(S,diacylglyceryl)Cys-, in which Xaa is hydrophobic (preferably Leu), and Yaa (Ala or Ser) and Zaa (Gly or Ala) have small, neutral side chains.. It functions in the pathway protein modification; lipoprotein biosynthesis (signal peptide cleavage). Its function is as follows. This protein specifically catalyzes the removal of signal peptides from prolipoproteins. The protein is Lipoprotein signal peptidase of Campylobacter jejuni subsp. jejuni serotype O:2 (strain ATCC 700819 / NCTC 11168).